Consider the following 827-residue polypeptide: Putative transcriptional regulatory protein C16G5.16 (827 aa).

A DNA-binding region (zn(2)-C6 fungal-type) is located at residues 16–42 (CDECHRRKIKCDQRRPCSNCIAYNYEC). 3 disordered regions span residues 80–114 (LKLPSFLAPPNDKDSPVNQSPWKRSDSSKRSSSQD), 158–193 (TVPNPVQESNSSSSQPDPLSFPYLPPTPAEDEHKKP), and 794–827 (QPPSMTNQVAYPTVRDGSNNSPDHPSSSNSKRTE). Basic and acidic residues predominate over residues 102-112 (KRSDSSKRSSS). Residue Ser112 is modified to Phosphoserine. 2 stretches are compositionally biased toward low complexity: residues 159–179 (VPNPVQESNSSSSQPDPLSFP) and 811–827 (SNNSPDHPSSSNSKRTE).

The protein belongs to the ASG1 family.

It localises to the cytoplasm. The protein localises to the nucleus. The sequence is that of Putative transcriptional regulatory protein C16G5.16 from Schizosaccharomyces pombe (strain 972 / ATCC 24843) (Fission yeast).